We begin with the raw amino-acid sequence, 314 residues long: Probable cell division protein WhiA (314 aa).

The H-T-H motif DNA-binding region spans 274–305; sequence SLAELGDRLEISKSGANHRMRKLKALEDMINA.

It belongs to the WhiA family.

Functionally, involved in cell division and chromosome segregation. The chain is Probable cell division protein WhiA from Leuconostoc citreum (strain KM20).